We begin with the raw amino-acid sequence, 89 residues long: Cell division protein ZapA (89 aa).

The protein belongs to the ZapA family. Type 2 subfamily. As to quaternary structure, homodimer. Interacts with FtsZ.

It localises to the cytoplasm. In terms of biological role, activator of cell division through the inhibition of FtsZ GTPase activity, therefore promoting FtsZ assembly into bundles of protofilaments necessary for the formation of the division Z ring. It is recruited early at mid-cell but it is not essential for cell division. This Bacillus mycoides (strain KBAB4) (Bacillus weihenstephanensis) protein is Cell division protein ZapA.